The following is a 947-amino-acid chain: Translation initiation factor IF-2 (947 aa).

The segment at 61–284 (IQANQPAKNP…TAKNNKSHKI (224 aa)) is disordered. The segment covering 151–169 (QIEKAKQKLQEIQKSREAL) has biased composition (basic and acidic residues). Residues 175-188 (SNANNANSTNNANN) show a composition bias toward low complexity. Residues 189–206 (AKKEISEVKKQEQEIKRH) show a composition bias toward basic and acidic residues. The span at 207-218 (ENIKRRTGFRVI) shows a compositional bias: basic residues. Residues 247–262 (EDIKKEWQEKDKQEAK) show a composition bias toward basic and acidic residues. One can recognise a tr-type G domain in the interval 446–615 (ERPPVVTIMG…LIQADIMELK (170 aa)). Residues 455 to 462 (GHVDHGKT) form a G1 region. 455–462 (GHVDHGKT) contributes to the GTP binding site. The G2 stretch occupies residues 480 to 484 (GITQH). The segment at 501–504 (DTPG) is G3. GTP is bound by residues 501-505 (DTPGH) and 555-558 (NKMD). Residues 555–558 (NKMD) form a G4 region. The tract at residues 591–593 (SAK) is G5.

This sequence belongs to the TRAFAC class translation factor GTPase superfamily. Classic translation factor GTPase family. IF-2 subfamily.

The protein localises to the cytoplasm. In terms of biological role, one of the essential components for the initiation of protein synthesis. Protects formylmethionyl-tRNA from spontaneous hydrolysis and promotes its binding to the 30S ribosomal subunits. Also involved in the hydrolysis of GTP during the formation of the 70S ribosomal complex. The chain is Translation initiation factor IF-2 from Helicobacter pylori (strain P12).